The chain runs to 333 residues: D-threonate 4-phosphate dehydrogenase (333 aa).

Residues histidine 140 and threonine 141 each coordinate substrate. A divalent metal cation contacts are provided by histidine 170, histidine 214, and histidine 270. Lysine 278, asparagine 287, and arginine 296 together coordinate substrate.

Belongs to the PdxA family. PdxA2 subfamily. In terms of assembly, homodimer. A divalent metal cation is required as a cofactor.

The catalysed reaction is 4-O-phospho-D-threonate + NAD(+) = dihydroxyacetone phosphate + CO2 + NADH. Its function is as follows. Catalyzes the NAD-dependent oxidation and subsequent decarboxylation of D-threonate 4-phosphate to produce dihydroxyacetone phosphate (DHAP). Can also use 4-hydroxy-L-threonine 4-phosphate as substrate. This is D-threonate 4-phosphate dehydrogenase from Cupriavidus necator (strain ATCC 17699 / DSM 428 / KCTC 22496 / NCIMB 10442 / H16 / Stanier 337) (Ralstonia eutropha).